The sequence spans 147 residues: Cyanate hydratase (147 aa).

Catalysis depends on residues Arg88, Glu91, and Ser114.

The protein belongs to the cyanase family.

The catalysed reaction is cyanate + hydrogencarbonate + 3 H(+) = NH4(+) + 2 CO2. In terms of biological role, catalyzes the reaction of cyanate with bicarbonate to produce ammonia and carbon dioxide. The protein is Cyanate hydratase of Variovorax paradoxus (strain S110).